We begin with the raw amino-acid sequence, 155 residues long: Ribosomal RNA large subunit methyltransferase H (155 aa).

The S-adenosyl-L-methionine site is built by Leu72 and Gly104.

This sequence belongs to the RNA methyltransferase RlmH family. In terms of assembly, homodimer.

The protein localises to the cytoplasm. The enzyme catalyses pseudouridine(1915) in 23S rRNA + S-adenosyl-L-methionine = N(3)-methylpseudouridine(1915) in 23S rRNA + S-adenosyl-L-homocysteine + H(+). In terms of biological role, specifically methylates the pseudouridine at position 1915 (m3Psi1915) in 23S rRNA. This is Ribosomal RNA large subunit methyltransferase H from Fusobacterium nucleatum subsp. nucleatum (strain ATCC 25586 / DSM 15643 / BCRC 10681 / CIP 101130 / JCM 8532 / KCTC 2640 / LMG 13131 / VPI 4355).